The sequence spans 515 residues: Putative cytochrome P450 CYP13A2 (515 aa).

Cysteine 460 provides a ligand contact to heme.

This sequence belongs to the cytochrome P450 family. The cofactor is heme.

In terms of biological role, cytochromes P450 are a group of heme-thiolate monooxygenases. They oxidize a variety of structurally unrelated compounds, including steroids, fatty acids, and xenobiotics. The polypeptide is Putative cytochrome P450 CYP13A2 (cyp-13A2) (Caenorhabditis elegans).